We begin with the raw amino-acid sequence, 211 residues long: Large ribosomal subunit protein bL17c (211 aa).

The transit peptide at Met1 to Ala95 directs the protein to the chloroplast.

This sequence belongs to the bacterial ribosomal protein bL17 family. Part of the 50S ribosomal subunit.

It localises to the plastid. The protein localises to the chloroplast. Functionally, this protein binds directly to 23S ribosomal RNA. The sequence is that of Large ribosomal subunit protein bL17c (RPL17) from Arabidopsis thaliana (Mouse-ear cress).